The chain runs to 498 residues: Glycerol kinase (498 aa).

T14 is a binding site for ADP. ATP is bound by residues T14 and T15. T14 contributes to the sn-glycerol 3-phosphate binding site. R18 contributes to the ADP binding site. Sn-glycerol 3-phosphate is bound by residues R84, E85, Y136, and D246. Residues R84, E85, Y136, D246, and Q247 each contribute to the glycerol site. ADP contacts are provided by T268 and G311. Residues T268, G311, Q315, and G412 each coordinate ATP. Positions 412 and 416 each coordinate ADP.

Belongs to the FGGY kinase family.

It catalyses the reaction glycerol + ATP = sn-glycerol 3-phosphate + ADP + H(+). It participates in polyol metabolism; glycerol degradation via glycerol kinase pathway; sn-glycerol 3-phosphate from glycerol: step 1/1. Its activity is regulated as follows. Inhibited by fructose 1,6-bisphosphate (FBP). Functionally, key enzyme in the regulation of glycerol uptake and metabolism. Catalyzes the phosphorylation of glycerol to yield sn-glycerol 3-phosphate. This chain is Glycerol kinase, found in Leptospira biflexa serovar Patoc (strain Patoc 1 / Ames).